The sequence spans 248 residues: MHKKKHIKHGTNKQEIINIGTKSPTFQEKQRPSKTDQRSTVWREEQKKQELKVHRIFHPQPRTGFDVGKGIDPWLTTWQMITVILATLCIILVTKVGFLIPSLFSKGEKQSRKFSLLDPLCDRNDDSSCDFCSSDWIAFGNNFYCVFRENSKTWVESQSACEELNSHLVIIDSKAEVENLLLFEMDGWILHRMDGTNSSRLWGNDIKIRNTLMNDSEKKNHSCHYLRGNIFMPDECSAKKTYICEFNI.

At 1 to 79 (MHKKKHIKHG…GIDPWLTTWQ (79 aa)) the chain is on the cytoplasmic side. A disordered region spans residues 19–44 (IGTKSPTFQEKQRPSKTDQRSTVWRE). Residues 28-44 (EKQRPSKTDQRSTVWRE) are compositionally biased toward basic and acidic residues. A helical; Signal-anchor for type II membrane protein membrane pass occupies residues 80–100 (MITVILATLCIILVTKVGFLI). The Extracellular portion of the chain corresponds to 101–248 (PSLFSKGEKQ…KKTYICEFNI (148 aa)). Cystine bridges form between Cys132–Cys145, Cys161–Cys244, and Cys223–Cys236. The C-type lectin domain maps to 139-245 (FGNNFYCVFR…CSAKKTYICE (107 aa)). Asn197, Asn214, and Asn220 each carry an N-linked (GlcNAc...) asparagine glycan.

As to quaternary structure, heterodimer with KLRE1. In terms of tissue distribution, expressed in natural killer (NK) cells.

It is found in the cell membrane. Functionally, lectin-like receptor for natural killer (NK) cells. Heterodimer formation with KLRE1 mediates NK cell cytolytic activity. The chain is Killer cell lectin-like receptor subfamily I member 2 from Mus musculus (Mouse).